The primary structure comprises 98 residues: NADH-ubiquinone oxidoreductase chain 4L (98 aa).

Transmembrane regions (helical) follow at residues 1-21 (MSMV…GLLM), 29-49 (SLLC…VTIL), and 61-81 (IILL…LVMV).

The protein belongs to the complex I subunit 4L family. In terms of assembly, core subunit of respiratory chain NADH dehydrogenase (Complex I) which is composed of 45 different subunits.

The protein localises to the mitochondrion inner membrane. It carries out the reaction a ubiquinone + NADH + 5 H(+)(in) = a ubiquinol + NAD(+) + 4 H(+)(out). Functionally, core subunit of the mitochondrial membrane respiratory chain NADH dehydrogenase (Complex I) which catalyzes electron transfer from NADH through the respiratory chain, using ubiquinone as an electron acceptor. Part of the enzyme membrane arm which is embedded in the lipid bilayer and involved in proton translocation. This chain is NADH-ubiquinone oxidoreductase chain 4L (MT-ND4L), found in Phoca fasciata (Ribbon seal).